We begin with the raw amino-acid sequence, 225 residues long: Urease accessory protein UreE (225 aa).

Basic and acidic residues-rich tracts occupy residues H189–G202 and N212–R225. Residues H189–R225 are disordered.

Belongs to the UreE family.

It localises to the cytoplasm. Its function is as follows. Involved in urease metallocenter assembly. Binds nickel. Probably functions as a nickel donor during metallocenter assembly. The chain is Urease accessory protein UreE from Edwardsiella ictaluri.